A 680-amino-acid chain; its full sequence is Coiled-coil domain-containing protein 138 (680 aa).

T63 is subject to Phosphothreonine. S64 is subject to Phosphoserine. Positions 260–339 form a coiled coil; the sequence is KEQHGTEIEH…YEFMTVQRLK (80 aa). Residues 390 to 410 form a disordered region; sequence EPEEPGVDGGKPPAKPSQRSD. S484 is modified (phosphoserine).

This chain is Coiled-coil domain-containing protein 138 (Ccdc138), found in Mus musculus (Mouse).